Consider the following 115-residue polypeptide: NAD(P)H-quinone oxidoreductase subunit M (115 aa).

It belongs to the complex I NdhM subunit family. NDH-1 can be composed of about 15 different subunits; different subcomplexes with different compositions have been identified which probably have different functions.

The protein localises to the cellular thylakoid membrane. It catalyses the reaction a plastoquinone + NADH + (n+1) H(+)(in) = a plastoquinol + NAD(+) + n H(+)(out). The enzyme catalyses a plastoquinone + NADPH + (n+1) H(+)(in) = a plastoquinol + NADP(+) + n H(+)(out). Its function is as follows. NDH-1 shuttles electrons from an unknown electron donor, via FMN and iron-sulfur (Fe-S) centers, to quinones in the respiratory and/or the photosynthetic chain. The immediate electron acceptor for the enzyme in this species is believed to be plastoquinone. Couples the redox reaction to proton translocation, and thus conserves the redox energy in a proton gradient. Cyanobacterial NDH-1 also plays a role in inorganic carbon-concentration. The sequence is that of NAD(P)H-quinone oxidoreductase subunit M from Trichodesmium erythraeum (strain IMS101).